The chain runs to 70 residues: Cold shock protein CspV (70 aa).

The CSD domain occupies 7-67 (GSVKWFNETK…GKKGPQASNV (61 aa)).

The protein resides in the cytoplasm. The chain is Cold shock protein CspV (cspV) from Vibrio cholerae serotype O1 (strain ATCC 39315 / El Tor Inaba N16961).